The primary structure comprises 136 residues: Ribosome-binding factor A (136 aa).

Belongs to the RbfA family. In terms of assembly, monomer. Binds 30S ribosomal subunits, but not 50S ribosomal subunits or 70S ribosomes.

It localises to the cytoplasm. Its function is as follows. One of several proteins that assist in the late maturation steps of the functional core of the 30S ribosomal subunit. Associates with free 30S ribosomal subunits (but not with 30S subunits that are part of 70S ribosomes or polysomes). Required for efficient processing of 16S rRNA. May interact with the 5'-terminal helix region of 16S rRNA. The protein is Ribosome-binding factor A of Photorhabdus laumondii subsp. laumondii (strain DSM 15139 / CIP 105565 / TT01) (Photorhabdus luminescens subsp. laumondii).